A 372-amino-acid chain; its full sequence is Meiotic drive suppressor wtf18 (372 aa).

The next 6 membrane-spanning stretches (helical) occupy residues 86–106 (FLLR…TAWV), 120–140 (AFSV…FCFF), 153–173 (VTVI…AQCV), 197–217 (DLVV…FGCV), 233–253 (CSIS…IWTL), and 257–277 (LFGL…TKGL).

It belongs to the WTF family. Homomer. Interacts with other proteins that exhibit high sequence similarity.

It localises to the spore membrane. Its subcellular location is the vacuole membrane. Its function is as follows. Acts as a suppressor component of the dual wtf meiotic drive system, and can suppress but not confer meiotic drive by compatible poisons. Wtf meiotic drive systems promote unequal transmission of alleles from the parental zygote to progeny spores by encoding a poison and an antidote from the same locus; the poison is trans-acting and forms toxic aggregates in all spores within an ascus, wherease the antidote is spore-specific and targets aggregates for degradation by the vacuole. Meiotic drive by wtf systems therefore lead to poisoning of all progeny that do not inherit the dual poison/antidote allele, or express a compatible antidote. This chain is Meiotic drive suppressor wtf18, found in Schizosaccharomyces pombe (strain 972 / ATCC 24843) (Fission yeast).